The primary structure comprises 525 residues: MLEFSVIERGGYIPAVEKNKAFLRADGWNDYSFVTMFYLTVFDEHGEKCDIGNVKIGFVGQKEEVSTYSLIDKKFSQLPEMFFSLGESIDYYVNLSKLSDGFKHNLLKAIQDLVVWPNRLADIENESVLNTSLLRGVTLSEIHGQFARVLNGLPELSDFHFSFNRKSAPGFSDLTIPFEVTVNSMPSTNIHAFIGRNGCGKTTILNGMIGAITNPENNEYFFSENNRLIESRIPKGYFRSLVSVSFSAFDPFTPPKEQPDPAKGTQYFYIGLKNAASNSLKSLGDLRLEFISAFIGCMRVDRKRQLWLEAIKKLSSDENFSNMELISLISKYEELRRNEPQIQVDDDKFTKLFYDNIQKYLLRMSSGHAIVLFTITRLVDVVGEKSLVLFDEPEVHLHPPLLSAFLRTLSDLLDARNGVAIIATHSPVVLQEVPKSCMWKVLRSREAINIIRPDIETFGENLGVLTREVFLLEVTNSGYHHLLSQSVDSELSYETILKNYNGQIGLEGRTVLKAMIMNRDEGKVQ.

This chain is Protein ea59 (ea59), found in Escherichia coli (Bacteriophage lambda).